The sequence spans 327 residues: Ribose-phosphate pyrophosphokinase (327 aa).

ATP contacts are provided by residues 40–42 and 99–100; these read DGE and RQ. Positions 134 and 173 each coordinate Mg(2+). Lys196 is an active-site residue. D-ribose 5-phosphate contacts are provided by residues Arg198, Asp222, and 226–230; that span reads DTANT.

This sequence belongs to the ribose-phosphate pyrophosphokinase family. Class I subfamily. As to quaternary structure, homohexamer. Requires Mg(2+) as cofactor.

Its subcellular location is the cytoplasm. It catalyses the reaction D-ribose 5-phosphate + ATP = 5-phospho-alpha-D-ribose 1-diphosphate + AMP + H(+). It functions in the pathway metabolic intermediate biosynthesis; 5-phospho-alpha-D-ribose 1-diphosphate biosynthesis; 5-phospho-alpha-D-ribose 1-diphosphate from D-ribose 5-phosphate (route I): step 1/1. In terms of biological role, involved in the biosynthesis of the central metabolite phospho-alpha-D-ribosyl-1-pyrophosphate (PRPP) via the transfer of pyrophosphoryl group from ATP to 1-hydroxyl of ribose-5-phosphate (Rib-5-P). The polypeptide is Ribose-phosphate pyrophosphokinase (Neisseria meningitidis serogroup A / serotype 4A (strain DSM 15465 / Z2491)).